Consider the following 413-residue polypeptide: Sporulation-specific protein 74 (413 aa).

The interval 1–87 (MGAGTLLNGL…SEHTDDFNDG (87 aa)) is disordered. The span at 69–83 (HENKDIHERSEHTDD) shows a compositional bias: basic and acidic residues.

Interacts with itself. Interacts with MPC54, NUD1 and SPO21/MPC70.

It is found in the cytoplasm. It localises to the cytoskeleton. The protein localises to the microtubule organizing center. The protein resides in the spindle pole body. Involved in the pathway that organizes the shaping and sizing of the prospore membrane (PSM) during sporulation. Probable component of a core structural unit of the scaffold that initiates synthesis of the prospore membrane. This chain is Sporulation-specific protein 74 (SPO74), found in Saccharomyces cerevisiae (strain ATCC 204508 / S288c) (Baker's yeast).